Consider the following 141-residue polypeptide: Large ribosomal subunit protein uL13 (141 aa).

It belongs to the universal ribosomal protein uL13 family. In terms of assembly, part of the 50S ribosomal subunit.

In terms of biological role, this protein is one of the early assembly proteins of the 50S ribosomal subunit, although it is not seen to bind rRNA by itself. It is important during the early stages of 50S assembly. In Helicobacter acinonychis (strain Sheeba), this protein is Large ribosomal subunit protein uL13.